Consider the following 496-residue polypeptide: MLO-like protein 15 (496 aa).

The Extracellular portion of the chain corresponds to 1 to 9 (MAGGGTTLE). The chain crosses the membrane as a helical span at residues 10-30 (YTPTWVVALVCSVIVSISFAV). The Cytoplasmic segment spans residues 31 to 59 (ERLIHRAGKHFKNNDQKQLFGALQKIKEE). Residues 60–80 (LMLVGFISLLLSVGQSKIAKI) traverse the membrane as a helical segment. Residues 81–147 (CISKELSEKF…MSLSALHELH (67 aa)) are Extracellular-facing. Residues 148-168 (IFIFVLAVAHIIFCLLTIVFG) form a helical membrane-spanning segment. At 169 to 269 (TMKIKQWKKW…KYLMRALNSD (101 aa)) the chain is on the cytoplasmic side. Residues 270–290 (FKKVVGISWYLWVFVVLFLLL) form a helical membrane-spanning segment. N291 is a topological domain (extracellular). Residues 292–312 (IVAWHVYFWLAFIPLILLLAV) traverse the membrane as a helical segment. Residues 313–355 (GTKLEHIITDLAHEVAEKHIAVEGDLVVRPSDDLFWFQSPRLV) are Cytoplasmic-facing. A helical transmembrane segment spans residues 356–376 (LFLIHFILFQNSFEIAYFFFI). The Extracellular segment spans residues 377–397 (LFQFGWDSCIMDHVKFVIPRL). The helical transmembrane segment at 398–418 (VIGVIIQLLCSYSTLPLYALV) threads the bilayer. The Cytoplasmic portion of the chain corresponds to 419-496 (TQMGSSFKGA…KEKSEIAHHD (78 aa)). The segment at 432 to 453 (EQTQEHLVGWAKMAKRGVKKGA) is calmodulin-binding. The interval 454–496 (TQVGTSHDATSPRPSIQLNSLLGKGSSQQNQNPKEKSEIAHHD) is disordered. Polar residues predominate over residues 455-485 (QVGTSHDATSPRPSIQLNSLLGKGSSQQNQN). Over residues 486–496 (PKEKSEIAHHD) the composition is skewed to basic and acidic residues.

It belongs to the MLO family.

It is found in the membrane. May be involved in modulation of pathogen defense and leaf cell death. Activity seems to be regulated by Ca(2+)-dependent calmodulin binding and seems not to require heterotrimeric G proteins. The chain is MLO-like protein 15 (MLO15) from Arabidopsis thaliana (Mouse-ear cress).